The sequence spans 151 residues: Large ribosomal subunit protein bL9 (151 aa).

Belongs to the bacterial ribosomal protein bL9 family.

Binds to the 23S rRNA. The polypeptide is Large ribosomal subunit protein bL9 (Lacticaseibacillus casei (strain BL23) (Lactobacillus casei)).